A 422-amino-acid chain; its full sequence is Telomerase-associated protein of 50 kDa (422 aa).

As to quaternary structure, component of the telomerase holoenzyme complex, composed of the catalytic core (the catalytic subunit TERT, the telomerase RNA template component TER and TAP65/p65), which is associated with two heterotrimeric subcomplexes: (i) the replication protein A (RPA)-related subcomplex, composed of TEB1, RPA2/TEB2 and RPA3/TEB3 and (ii) the CST-like subcomplex, composed of TAP75/p75, TAP45/p45 and TAP19/p19. TEB1 and the CST-like subcomplex are tethered to the catalytic core by TAP50/p50.

The protein localises to the chromosome. It is found in the telomere. Its function is as follows. Tethering component of the holoenzyme telomerase ribonucleoprotein (RNP) complex. Telomerase is an essential ribonucleoprotein enzyme that copies new telomeric repeats onto chromosome ends by repetitively synthesizing the short telomere-repeat sequence 5'-TTGGGG-3' using an RNA template component TER. In the telomerase holoenzyme complex, acts as a hub that anchors the two heterotrimeric subcomplexes with the catalytic core. This is Telomerase-associated protein of 50 kDa from Tetrahymena thermophila (strain SB210).